The sequence spans 359 residues: Mannose-1-phosphate guanylyltransferase catalytic subunit beta (359 aa).

The interval 2 to 221 (KALILVGGFG…EGFWMDVGQP (220 aa)) is substrate-binding domain. Asp109 is a binding site for GDP-alpha-D-mannose. Asp109 contacts Mg(2+). Lys161 is a catalytic residue. Residue Asp217 coordinates GDP-alpha-D-mannose. Asp217 is a binding site for Mg(2+). The hexapeptide repeat domain stretch occupies residues 244 to 359 (ATGNGIIGPV…SSIPEPEIIM (116 aa)).

This sequence belongs to the transferase hexapeptide repeat family. Component of the GMPPA-GMPPB mannose-1-phosphate guanylyltransferase complex composed of 4 GMPPA subunits and 8 gmppB subunits; the complex is organized into three layers, a central layer made up of 2 gmppA dimers sandwiched between two layers each made up of 2 gmppB dimers. gmppB catalytic activity is reduced when part of the complex and binding of GDP-alpha-D-Mannose by gmppA induces allosteric feedback inhibition of gmppB. It depends on Mg(2+) as a cofactor.

It catalyses the reaction alpha-D-mannose 1-phosphate + GTP + H(+) = GDP-alpha-D-mannose + diphosphate. Its pathway is nucleotide-sugar biosynthesis; GDP-alpha-D-mannose biosynthesis; GDP-alpha-D-mannose from alpha-D-mannose 1-phosphate (GTP route): step 1/1. With respect to regulation, enzyme activity is reduced by incorporation into the GMPPA-GMPPB mannose-1-phosphate guanylyltransferase complex. Allosterically inhibited, when part of the GMPPA-GMPPB complex, by GDP-alpha-D-mannose binding to GMPPA. Catalytic subunit of the GMPPA-GMPPB mannose-1-phosphate guanylyltransferase complex. Catalyzes the formation of GDP-mannose, an essential precursor of glycan moieties of glycoproteins and glycolipids. Can catalyze the reverse reaction in vitro. Together with GMPPA regulates GDP-alpha-D-mannose levels. The protein is Mannose-1-phosphate guanylyltransferase catalytic subunit beta (gmppB) of Dictyostelium discoideum (Social amoeba).